The chain runs to 116 residues: Ribosome-binding factor A (116 aa).

It belongs to the RbfA family. As to quaternary structure, monomer. Binds 30S ribosomal subunits, but not 50S ribosomal subunits or 70S ribosomes.

Its subcellular location is the cytoplasm. One of several proteins that assist in the late maturation steps of the functional core of the 30S ribosomal subunit. Associates with free 30S ribosomal subunits (but not with 30S subunits that are part of 70S ribosomes or polysomes). Required for efficient processing of 16S rRNA. May interact with the 5'-terminal helix region of 16S rRNA. This is Ribosome-binding factor A from Streptococcus pneumoniae (strain ATCC 700669 / Spain 23F-1).